Consider the following 230-residue polypeptide: Large ribosomal subunit protein uL1 (230 aa).

It belongs to the universal ribosomal protein uL1 family. Part of the 50S ribosomal subunit.

Binds directly to 23S rRNA. The L1 stalk is quite mobile in the ribosome, and is involved in E site tRNA release. Its function is as follows. Protein L1 is also a translational repressor protein, it controls the translation of the L11 operon by binding to its mRNA. The protein is Large ribosomal subunit protein uL1 of Methylobacillus flagellatus (strain ATCC 51484 / DSM 6875 / VKM B-1610 / KT).